A 134-amino-acid polypeptide reads, in one-letter code: Fluoride-specific ion channel FluC 2 (134 aa).

4 consecutive transmembrane segments (helical) span residues 1–21 (MNYF…EITG), 28–48 (IFPV…LFFM), 68–88 (GFLG…LLLF), and 92–112 (LLIG…SGIL). Positions 71 and 74 each coordinate Na(+).

The protein belongs to the fluoride channel Fluc/FEX (TC 1.A.43) family.

Its subcellular location is the cell membrane. It carries out the reaction fluoride(in) = fluoride(out). Its activity is regulated as follows. Na(+) is not transported, but it plays an essential structural role and its presence is essential for fluoride channel function. Its function is as follows. Fluoride-specific ion channel. Important for reducing fluoride concentration in the cell, thus reducing its toxicity. The polypeptide is Fluoride-specific ion channel FluC 2 (Carboxydothermus hydrogenoformans (strain ATCC BAA-161 / DSM 6008 / Z-2901)).